Reading from the N-terminus, the 63-residue chain is Cecropin-C (63 aa).

A signal peptide spans 1–23 (MNFYKIFVFVALILAISIGQSEA). Arginine 62 carries the arginine amide modification.

Belongs to the cecropin family.

The protein localises to the secreted. Its function is as follows. Cecropins have lytic and antibacterial activity against several Gram-positive and Gram-negative bacteria. The chain is Cecropin-C (CecC) from Drosophila mauritiana (Fruit fly).